The sequence spans 496 residues: Glycerol kinase (496 aa).

Threonine 12 contributes to the ADP binding site. Residues threonine 12, threonine 13, and serine 14 each coordinate ATP. Threonine 12 is a binding site for sn-glycerol 3-phosphate. Arginine 16 provides a ligand contact to ADP. 3 residues coordinate sn-glycerol 3-phosphate: arginine 82, glutamate 83, and tyrosine 134. Glycerol-binding residues include arginine 82, glutamate 83, and tyrosine 134. Histidine 230 carries the phosphohistidine; by HPr modification. Residue aspartate 244 participates in sn-glycerol 3-phosphate binding. Glycerol-binding residues include aspartate 244 and glutamine 245. 2 residues coordinate ADP: threonine 266 and glycine 309. 4 residues coordinate ATP: threonine 266, glycine 309, glutamine 313, and glycine 410. The ADP site is built by glycine 410 and asparagine 414.

This sequence belongs to the FGGY kinase family. Homotetramer and homodimer (in equilibrium). The phosphoenolpyruvate-dependent sugar phosphotransferase system (PTS), including enzyme I, and histidine-containing protein (HPr) are required for the phosphorylation, which leads to the activation of the enzyme.

It carries out the reaction glycerol + ATP = sn-glycerol 3-phosphate + ADP + H(+). It functions in the pathway polyol metabolism; glycerol degradation via glycerol kinase pathway; sn-glycerol 3-phosphate from glycerol: step 1/1. With respect to regulation, activated by phosphorylation and inhibited by fructose 1,6-bisphosphate (FBP). Its function is as follows. Key enzyme in the regulation of glycerol uptake and metabolism. Catalyzes the phosphorylation of glycerol to yield sn-glycerol 3-phosphate. The sequence is that of Glycerol kinase from Bacillus cereus (strain G9842).